Consider the following 345-residue polypeptide: Sorting nexin-15 (345 aa).

The region spanning 1 to 130 (MSRQAKDDFL…EFFRGGEVTR (130 aa)) is the PX domain. Position 105 is an omega-N-methylarginine (R105). The tract at residues 133-163 (EVSGDLHILPPPLIPTPPPDEPRVQPHETWL) is disordered. A compositionally biased stretch (pro residues) spans 141–151 (LPPPLIPTPPP). S208 and S234 each carry phosphoserine. Residues 226-274 (SKEEGAGPSPTHIGELAALEAGSGRPDQEPWEPGGQAEEDDEEGEPAPA) are disordered. The 74-residue stretch at 272–345 (APAYLSQATE…AEEILHLHLS (74 aa)) folds into the MIT domain.

This sequence belongs to the sorting nexin family.

Its function is as follows. May be involved in several stages of intracellular trafficking. Overexpression of SNX15 disrupts the normal trafficking of proteins from the plasma membrane to recycling endosomes or the TGN. This is Sorting nexin-15 (SNX15) from Bos taurus (Bovine).